The chain runs to 1040 residues: MPPPPHIKPENVLKRAQELIAVGQAPAALNVLHEHVTSKRTRSSPISSLEPVMLQIVELCVDMRKGKAAKDGLYQYKNIAQNTNVGTIEVVLKKFIELAEKKVTEAQTKADEIQSSLESAAPSANVEDLEAIETPETILLATVSGEQSRDRTDRAVVTPWLKFLWETYRTVLEILKNNARLEVMYQTTALQAFQFCLKYTRKTEFRRLCELLRNHVQNAAKYSAQMHAINLSDPDTLQRHLDTRFQQLNVAVELELWQEAFRSIEDIHTLLSLSKRPAKNVMMANYYEKLARIFLVSENYLFHAAAWSRYYNLLRQSAATLAAGQGTKKENPSVTEADMTKAASFVLLSALAIPVISTSRSRGALVDVDEVRKNKNTRLTNLLGMAQPPTRAVLFKDAMNKGLLKRARPEIRELYNILEVDFHPLSICKKITPILKQIGSDPEMEKYVVPLQQVILTRLFQQLSQVYESVELKFVYELAQFPDPFQITPAMIEKFIMNGCKKGDLAIRVDHISGVLTFDSDVFSSAKALHPGSAAGSAESEVGSVQRLQNTPAEIARLQLTRLAKTLHVSCMYVDPSYNESRIQAKQTAQARALAGAAKEHEETLARRVIIEKKKEAATDALQRKQREEETRKRIRTQQLQEAEKQRLLDEQREREKKRIKDEQDRIRQQELKKQLEELKSGVKGIDINEIDLQDLDANRLRAMKLAQLEKEKNELNDRIRTTGKRIDHLERAFRREELKHIPEDYEAQKKRDMEIYEATKAETLKEAELKHKEAVALKHRLSRLVPHFNSFRKEVSEKRHEEFEKRRKAAERDFEAKKKQRVKEVQERRRREKMEREMAERQRKEEEERAQREEEEKRARDEERRRVLAEEKAKREEERKRLDEIAAKQKQREEEAEARRAARKAGLEPAAPAARPEPTERTAPRLNIAPRTGGPSWRERQAAKEAAGGAAPEAAPKEEAPQPARRPGGYVPPHLRSGSSAAPAAPPSNGAPERYVPRHARESSSSQPPSRTQTPGSDKPSEGGSAGKWVPRWKQQQNQ.

The stretch at 92-121 (LKKFIELAEKKVTEAQTKADEIQSSLESAA) forms a coiled coil. Residues 339–523 (MTKAASFVLL…GVLTFDSDVF (185 aa)) form the PCI domain. Residues 608–906 (RVIIEKKKEA…AEARRAARKA (299 aa)) are a coiled coil. 2 stretches are compositionally biased toward basic and acidic residues: residues 617 to 632 (AATD…EETR) and 795 to 901 (EVSE…EARR). Disordered regions lie at residues 617–641 (AATD…QQLQ) and 795–1040 (EVSE…QQNQ). Low complexity-rich tracts occupy residues 908–917 (LEPAAPAARP), 945–955 (KEAAGGAAPEA), 978–993 (SGSS…NGAP), and 1004–1018 (SSSS…TPGS).

The protein belongs to the eIF-3 subunit A family. In terms of assembly, component of the eukaryotic translation initiation factor 3 (eIF-3) complex.

Its subcellular location is the cytoplasm. Its function is as follows. RNA-binding component of the eukaryotic translation initiation factor 3 (eIF-3) complex, which is involved in protein synthesis of a specialized repertoire of mRNAs and, together with other initiation factors, stimulates binding of mRNA and methionyl-tRNAi to the 40S ribosome. The eIF-3 complex specifically targets and initiates translation of a subset of mRNAs involved in cell proliferation. In Aspergillus terreus (strain NIH 2624 / FGSC A1156), this protein is Eukaryotic translation initiation factor 3 subunit A (tif32).